Reading from the N-terminus, the 573-residue chain is Sulfite reductase [NADPH] hemoprotein beta-component (573 aa).

4 residues coordinate [4Fe-4S] cluster: Cys436, Cys442, Cys481, and Cys485. Cys485 lines the siroheme pocket.

Belongs to the nitrite and sulfite reductase 4Fe-4S domain family. Alpha(8)-beta(8). The alpha component is a flavoprotein, the beta component is a hemoprotein. Siroheme serves as cofactor. [4Fe-4S] cluster is required as a cofactor.

It catalyses the reaction hydrogen sulfide + 3 NADP(+) + 3 H2O = sulfite + 3 NADPH + 4 H(+). It participates in sulfur metabolism; hydrogen sulfide biosynthesis; hydrogen sulfide from sulfite (NADPH route): step 1/1. Its function is as follows. Component of the sulfite reductase complex that catalyzes the 6-electron reduction of sulfite to sulfide. This is one of several activities required for the biosynthesis of L-cysteine from sulfate. This Alteromonas mediterranea (strain DSM 17117 / CIP 110805 / LMG 28347 / Deep ecotype) protein is Sulfite reductase [NADPH] hemoprotein beta-component.